The primary structure comprises 1264 residues: Ubiquitin carboxyl-terminal hydrolase usp-48 (1264 aa).

In terms of domain architecture, USP spans 108–430; sequence AGLINGGNFC…ACYGLLYRRR (323 aa). Catalysis depends on Cys-117, which acts as the Nucleophile. Catalysis depends on His-366, which acts as the Proton acceptor. Disordered stretches follow at residues 390 to 415, 522 to 610, and 630 to 679; these read IPKP…KEKY, AKGE…IMDT, and TVEV…PVSS. Basic and acidic residues-rich tracts occupy residues 403–415 and 532–543; these read KTEK…KEKY and EASENEEKKKNE. Residues 516-547 are a coiled coil; the sequence is AQEYEVAKGEKKKKKKEASENEEKKKNEEDEA. The span at 565–575 shows a compositional bias: low complexity; the sequence is SEPSTSAAATE. Polar residues-rich tracts occupy residues 587 to 599 and 663 to 678; these read ETPN…STQV and NGTN…QPVS.

It belongs to the peptidase C19 family. As to expression, broadly expressed. Expressed in germline.

Its subcellular location is the nucleus. It localises to the chromosome. It catalyses the reaction Thiol-dependent hydrolysis of ester, thioester, amide, peptide and isopeptide bonds formed by the C-terminal Gly of ubiquitin (a 76-residue protein attached to proteins as an intracellular targeting signal).. In terms of biological role, recognizes and hydrolyzes the peptide bond at the C-terminal Gly of ubiquitin. Involved in the processing of poly-ubiquitin precursors as well as that of ubiquitinated proteins. Required post-developmentally to restrict the plasticity of epidermal cells, probably by regulating gene expression. This is Ubiquitin carboxyl-terminal hydrolase usp-48 from Caenorhabditis elegans.